Here is a 243-residue protein sequence, read N- to C-terminus: 2-C-methyl-D-erythritol 4-phosphate cytidylyltransferase (243 aa).

It belongs to the IspD/TarI cytidylyltransferase family. IspD subfamily. As to quaternary structure, homodimer.

It carries out the reaction 2-C-methyl-D-erythritol 4-phosphate + CTP + H(+) = 4-CDP-2-C-methyl-D-erythritol + diphosphate. Its pathway is isoprenoid biosynthesis; isopentenyl diphosphate biosynthesis via DXP pathway; isopentenyl diphosphate from 1-deoxy-D-xylulose 5-phosphate: step 2/6. Catalyzes the formation of 4-diphosphocytidyl-2-C-methyl-D-erythritol from CTP and 2-C-methyl-D-erythritol 4-phosphate (MEP). This Photorhabdus laumondii subsp. laumondii (strain DSM 15139 / CIP 105565 / TT01) (Photorhabdus luminescens subsp. laumondii) protein is 2-C-methyl-D-erythritol 4-phosphate cytidylyltransferase.